A 24-amino-acid chain; its full sequence is Glutathione S-transferase (24 aa).

This sequence belongs to the GST superfamily. In terms of assembly, monomer and homodimer.

Its subcellular location is the cytoplasm. It catalyses the reaction RX + glutathione = an S-substituted glutathione + a halide anion + H(+). In terms of biological role, conjugation of reduced glutathione to a wide number of exogenous and endogenous hydrophobic electrophiles. The protein is Glutathione S-transferase of Pseudomonas sp. (strain CF600).